The following is a 386-amino-acid chain: Probable Xaa-Pro aminopeptidase PMAA_074180 (386 aa).

Positions 160, 171, 311, and 350 each coordinate Mn(2+).

Belongs to the peptidase M24B family. Requires Mn(2+) as cofactor.

It catalyses the reaction Release of any N-terminal amino acid, including proline, that is linked to proline, even from a dipeptide or tripeptide.. Its function is as follows. Catalyzes the removal of a penultimate prolyl residue from the N-termini of peptides. The sequence is that of Probable Xaa-Pro aminopeptidase PMAA_074180 from Talaromyces marneffei (strain ATCC 18224 / CBS 334.59 / QM 7333) (Penicillium marneffei).